The following is a 445-amino-acid chain: GTPase Der (445 aa).

EngA-type G domains are found at residues 3–167 (PVIA…NLPD) and 180–353 (IKLA…ASAN). Residues 9-16 (GRPNVGKS), 56-60 (DTGGF), 119-122 (NKAE), 186-193 (GRPNVGKS), 233-237 (DTAGL), and 298-301 (NKWD) contribute to the GTP site. Positions 354–438 (RKMSTPVLTR…PLRIQLKSSV (85 aa)) constitute a KH-like domain.

It belongs to the TRAFAC class TrmE-Era-EngA-EngB-Septin-like GTPase superfamily. EngA (Der) GTPase family. In terms of assembly, associates with the 50S ribosomal subunit.

Functionally, GTPase that plays an essential role in the late steps of ribosome biogenesis. This is GTPase Der from Polaromonas naphthalenivorans (strain CJ2).